The primary structure comprises 274 residues: Protein RecA (274 aa).

43-50 contacts ATP; sequence GPESSGKT.

It belongs to the RecA family.

Its subcellular location is the cytoplasm. Can catalyze the hydrolysis of ATP in the presence of single-stranded DNA, the ATP-dependent uptake of single-stranded DNA by duplex DNA, and the ATP-dependent hybridization of homologous single-stranded DNAs. It interacts with LexA causing its activation and leading to its autocatalytic cleavage. The protein is Protein RecA of Neisseria mucosa.